The following is a 264-amino-acid chain: Phosphonoacetaldehyde hydrolase (264 aa).

Aspartate 9 acts as the Nucleophile in catalysis. The Mg(2+) site is built by aspartate 9 and alanine 11. Residue lysine 50 is the Schiff-base intermediate with substrate of the active site. Aspartate 183 contacts Mg(2+).

The protein belongs to the HAD-like hydrolase superfamily. PhnX family. Homodimer. Mg(2+) is required as a cofactor.

The catalysed reaction is phosphonoacetaldehyde + H2O = acetaldehyde + phosphate + H(+). Its function is as follows. Involved in phosphonate degradation. This chain is Phosphonoacetaldehyde hydrolase, found in Bacillus cereus (strain ZK / E33L).